Here is a 330-residue protein sequence, read N- to C-terminus: Olfactory receptor 5P70 (330 aa).

Topologically, residues Met-1 to Asp-28 are extracellular. Asn-8 carries an N-linked (GlcNAc...) asparagine glycan. The chain crosses the membrane as a helical span at residues Ile-29–Ile-49. At Leu-50 to Gln-57 the chain is on the cytoplasmic side. A helical membrane pass occupies residues Leu-58–Ser-78. At Ser-79–Ile-102 the chain is on the extracellular side. A disulfide bridge connects residues Cys-100 and Cys-192. A helical transmembrane segment spans residues Gln-103–Tyr-123. Residues Asp-124 to Ser-136 are Cytoplasmic-facing. The chain crosses the membrane as a helical span at residues Thr-137–Leu-157. At Asn-158–Val-199 the chain is on the extracellular side. A helical transmembrane segment spans residues Val-200–Ser-220. Topologically, residues Tyr-221 to Ala-240 are cytoplasmic. The chain crosses the membrane as a helical span at residues Phe-241–Ile-261. The Extracellular segment spans residues Tyr-262–Asn-274. A helical membrane pass occupies residues Lys-275–Leu-295. Topologically, residues Arg-296–Val-330 are cytoplasmic.

This sequence belongs to the G-protein coupled receptor 1 family.

Its subcellular location is the cell membrane. In terms of biological role, potential odorant receptor. In Mus musculus (Mouse), this protein is Olfactory receptor 5P70.